The primary structure comprises 206 residues: Probable N-acetyltransferase 14 (206 aa).

The region spanning 6-206 (LSVREMREDE…TLVREFSKDL (201 aa)) is the N-acetyltransferase domain. A helical membrane pass occupies residues 57–77 (FVLASFALALLLPVFLAVAAV).

The protein belongs to the camello family. Expressed in K-562 and HeLa cell lines and in brain.

It localises to the membrane. In terms of biological role, probable acetyltransferase. Functionally, may act as a transcription factor that regulates the expression of coproporphyrinogen oxidase by binding to a promoter regulatory element. This Homo sapiens (Human) protein is Probable N-acetyltransferase 14 (NAT14).